A 262-amino-acid chain; its full sequence is 3-methyl-2-oxobutanoate hydroxymethyltransferase (262 aa).

Aspartate 43 and aspartate 82 together coordinate Mg(2+). Residues 43 to 44, aspartate 82, and lysine 111 each bind 3-methyl-2-oxobutanoate; that span reads DS. Residue glutamate 113 participates in Mg(2+) binding. Catalysis depends on glutamate 180, which acts as the Proton acceptor.

The protein belongs to the PanB family. As to quaternary structure, homodecamer; pentamer of dimers. Mg(2+) is required as a cofactor.

Its subcellular location is the cytoplasm. It carries out the reaction 3-methyl-2-oxobutanoate + (6R)-5,10-methylene-5,6,7,8-tetrahydrofolate + H2O = 2-dehydropantoate + (6S)-5,6,7,8-tetrahydrofolate. It functions in the pathway cofactor biosynthesis; (R)-pantothenate biosynthesis; (R)-pantoate from 3-methyl-2-oxobutanoate: step 1/2. Functionally, catalyzes the reversible reaction in which hydroxymethyl group from 5,10-methylenetetrahydrofolate is transferred onto alpha-ketoisovalerate to form ketopantoate. The chain is 3-methyl-2-oxobutanoate hydroxymethyltransferase from Wolinella succinogenes (strain ATCC 29543 / DSM 1740 / CCUG 13145 / JCM 31913 / LMG 7466 / NCTC 11488 / FDC 602W) (Vibrio succinogenes).